The primary structure comprises 501 residues: L-arabinose isomerase (501 aa).

Mn(2+)-binding residues include Glu-307, Glu-334, His-351, and His-450.

This sequence belongs to the arabinose isomerase family. Mn(2+) serves as cofactor.

It carries out the reaction beta-L-arabinopyranose = L-ribulose. Its pathway is carbohydrate degradation; L-arabinose degradation via L-ribulose; D-xylulose 5-phosphate from L-arabinose (bacterial route): step 1/3. In terms of biological role, catalyzes the conversion of L-arabinose to L-ribulose. This is L-arabinose isomerase from Acidothermus cellulolyticus (strain ATCC 43068 / DSM 8971 / 11B).